We begin with the raw amino-acid sequence, 180 residues long: ATP-dependent protease subunit HslV (180 aa).

T2 is an active-site residue. Na(+) is bound by residues G157, C160, and S163.

The protein belongs to the peptidase T1B family. HslV subfamily. In terms of assembly, a double ring-shaped homohexamer of HslV is capped on each side by a ring-shaped HslU homohexamer. The assembly of the HslU/HslV complex is dependent on binding of ATP.

Its subcellular location is the cytoplasm. It catalyses the reaction ATP-dependent cleavage of peptide bonds with broad specificity.. Its activity is regulated as follows. Allosterically activated by HslU binding. Functionally, protease subunit of a proteasome-like degradation complex believed to be a general protein degrading machinery. In Wigglesworthia glossinidia brevipalpis, this protein is ATP-dependent protease subunit HslV.